We begin with the raw amino-acid sequence, 320 residues long: Phosphate acetyltransferase (320 aa).

It belongs to the phosphate acetyltransferase and butyryltransferase family.

Its subcellular location is the cytoplasm. It catalyses the reaction acetyl-CoA + phosphate = acetyl phosphate + CoA. It functions in the pathway metabolic intermediate biosynthesis; acetyl-CoA biosynthesis; acetyl-CoA from acetate: step 2/2. This Mycoplasma genitalium (strain ATCC 33530 / DSM 19775 / NCTC 10195 / G37) (Mycoplasmoides genitalium) protein is Phosphate acetyltransferase (pta).